A 298-amino-acid polypeptide reads, in one-letter code: ATP synthase F(1) complex subunit gamma, mitochondrial (298 aa).

The N-terminal 25 residues, 1-25 (MFSRAGVAGLSAWTLQPQWIQVRNM), are a transit peptide targeting the mitochondrion. An N6-acetyllysine modification is found at Lys39. Residue Lys49 is modified to N6-succinyllysine. The residue at position 55 (Lys55) is an N6-acetyllysine. N6-acetyllysine; alternate is present on Lys115. Lys115 is subject to N6-succinyllysine; alternate. Ser146 is subject to Phosphoserine. Position 154 is an N6-acetyllysine; alternate (Lys154). Lys154 bears the N6-succinyllysine; alternate mark. Lys197 carries the N6-acetyllysine modification. Lys270 carries the post-translational modification N6-succinyllysine.

This sequence belongs to the ATPase gamma chain family. Component of the ATP synthase complex composed at least of ATP5F1A/subunit alpha, ATP5F1B/subunit beta, ATP5MC1/subunit c (homooctomer), MT-ATP6/subunit a, MT-ATP8/subunit 8, ATP5ME/subunit e, ATP5MF/subunit f, ATP5MG/subunit g, ATP5MK/subunit k, ATP5MJ/subunit j, ATP5F1C/subunit gamma, ATP5F1D/subunit delta, ATP5F1E/subunit epsilon, ATP5PF/subunit F6, ATP5PB/subunit b, ATP5PD/subunit d, ATP5PO/subunit OSCP. ATP synthase complex consists of a soluble F(1) head domain (subunits alpha(3) and beta(3)) - the catalytic core - and a membrane F(0) domain - the membrane proton channel (subunits c, a, 8, e, f, g, k and j). These two domains are linked by a central stalk (subunits gamma, delta, and epsilon) rotating inside the F1 region and a stationary peripheral stalk (subunits F6, b, d, and OSCP). Interacts with FLVCR2; this interaction occurs in the absence of heme and is disrupted upon heme binding.

The protein resides in the mitochondrion inner membrane. Subunit gamma, of the mitochondrial membrane ATP synthase complex (F(1)F(0) ATP synthase or Complex V) that produces ATP from ADP in the presence of a proton gradient across the membrane which is generated by electron transport complexes of the respiratory chain. ATP synthase complex consist of a soluble F(1) head domain - the catalytic core - and a membrane F(1) domain - the membrane proton channel. These two domains are linked by a central stalk rotating inside the F(1) region and a stationary peripheral stalk. During catalysis, ATP synthesis in the catalytic domain of F(1) is coupled via a rotary mechanism of the central stalk subunits to proton translocation. In vivo, can only synthesize ATP although its ATP hydrolase activity can be activated artificially in vitro. With the central stalk subunit delta, is essential for the biogenesis of F(1) catalytic part of the ATP synthase complex namely in the formation of F1 assembly intermediate. In Macaca fascicularis (Crab-eating macaque), this protein is ATP synthase F(1) complex subunit gamma, mitochondrial.